The following is a 395-amino-acid chain: Carbohydrate sulfotransferase 6 (395 aa).

The Cytoplasmic portion of the chain corresponds to 1 to 5; sequence MWLPR. A helical; Signal-anchor for type II membrane protein transmembrane segment spans residues 6-26; it reads VSSTAVTALLLAQTFLLLFLV. The Lumenal segment spans residues 27–395; it reads SRPGPSSPAG…ASSTASHPRN (369 aa). 49 to 55 contacts 3'-phosphoadenylyl sulfate; sequence WRSGSSF. An N-linked (GlcNAc...) asparagine glycan is attached at Asn116. Position 202 to 210 (202 to 210) interacts with 3'-phosphoadenylyl sulfate; it reads RDPRAVLRS. Residues Asn229, Asn305, and Asn328 are each glycosylated (N-linked (GlcNAc...) asparagine).

The protein belongs to the sulfotransferase 1 family. Gal/GlcNAc/GalNAc subfamily. Expressed in cornea. Mainly expressed in brain. Also expressed in spinal cord and trachea.

It is found in the golgi apparatus membrane. It carries out the reaction 3'-phosphoadenylyl sulfate + keratan = adenosine 3',5'-bisphosphate + keratan 6'-sulfate.. Functionally, sulfotransferase that utilizes 3'-phospho-5'-adenylyl sulfate (PAPS) as sulfonate donor to catalyze the transfer of sulfate to position 6 of non-reducing N-acetylglucosamine (GlcNAc) residues of keratan. Cooperates with B4GALT4 galactosyltransferase and B3GNT7 N-acetylglucosaminyltransferase to construct and elongate the sulfated disaccharide unit [-&gt;3Galbeta1-&gt;4(6-sulfoGlcNAcbeta)1-&gt;] within keratan sulfate polymer. Involved in biosynthesis of keratan sulfate in cornea, with an impact on proteoglycan fibril organization and corneal transparency. Involved in sulfation of endothelial mucins such as GLYCAM1. This Homo sapiens (Human) protein is Carbohydrate sulfotransferase 6.